The primary structure comprises 146 residues: Hemoglobin subunit beta (146 aa).

V1 is subject to N-acetylvaline. One can recognise a Globin domain in the interval 2–146 (HLSGEEKAAV…VANALAHKYH (145 aa)). T12 bears the Phosphothreonine mark. Residue S44 is modified to Phosphoserine. Position 59 is an N6-acetyllysine (K59). H63 contributes to the heme b binding site. K82 carries the post-translational modification N6-acetyllysine. H92 lines the heme b pocket. At C93 the chain carries S-nitrosocysteine. N6-acetyllysine is present on K144.

This sequence belongs to the globin family. In terms of assembly, heterotetramer of two alpha chains and two beta chains. In terms of tissue distribution, red blood cells.

Its function is as follows. Involved in oxygen transport from the lung to the various peripheral tissues. The polypeptide is Hemoglobin subunit beta (HBB) (Tupaia glis (Common tree shrew)).